We begin with the raw amino-acid sequence, 141 residues long: Auxin-responsive protein SAUR62 (141 aa).

Belongs to the ARG7 family. As to expression, expressed in stamen filaments and petals.

Its subcellular location is the cell membrane. In terms of biological role, may promote auxin-stimulated organ elongation, such as hypocotyls, stamen filaments and petals. The sequence is that of Auxin-responsive protein SAUR62 from Arabidopsis thaliana (Mouse-ear cress).